A 134-amino-acid polypeptide reads, in one-letter code: MSRRKARETAFKVVFQVDQVQADAKKAFDYLVLHDKLAEKNQGFSWDLIQGTLEKQAEIDQMIASYSREWALDRMSSVDRNIMRVAAYEILYLEDSQAVVAIDEAIEIAKKYGDEGSGSFVNAILDKILGEKNG.

It belongs to the NusB family.

In terms of biological role, involved in transcription antitermination. Required for transcription of ribosomal RNA (rRNA) genes. Binds specifically to the boxA antiterminator sequence of the ribosomal RNA (rrn) operons. The protein is Transcription antitermination protein NusB of Syntrophomonas wolfei subsp. wolfei (strain DSM 2245B / Goettingen).